The primary structure comprises 241 residues: 3-deoxy-D-manno-octulosonic acid kinase (241 aa).

Asp171 is a catalytic residue.

Belongs to the protein kinase superfamily. KdkA/RfaP family.

The protein resides in the cell inner membrane. The enzyme catalyses an alpha-Kdo-(2-&gt;6)-lipid IVA + ATP = a 4-O-phospho-alpha-Kdo-(2-&gt;6)-lipid IVA + ADP + H(+). It participates in bacterial outer membrane biogenesis; LPS core biosynthesis. Functionally, catalyzes the ATP-dependent phosphorylation of the 3-deoxy-D-manno-octulosonic acid (Kdo) residue in Kdo-lipid IV(A) at the 4-OH position. The protein is 3-deoxy-D-manno-octulosonic acid kinase of Haemophilus influenzae (strain PittEE).